Reading from the N-terminus, the 930-residue chain is Type I restriction enzyme SsaAORF53P endonuclease subunit (930 aa).

A Helicase ATP-binding domain is found at His254–Gly418. Thr268–Thr274 serves as a coordination point for ATP.

Belongs to the HsdR family. The type I restriction/modification system is composed of three polypeptides R, M and S.

The catalysed reaction is Endonucleolytic cleavage of DNA to give random double-stranded fragments with terminal 5'-phosphates, ATP is simultaneously hydrolyzed.. In terms of biological role, the restriction (R) subunit of a type I restriction enzyme that recognizes an undetermined sequence and cleaves a random distance away. Subunit R is required for both nuclease and ATPase activities, but not for modification. After locating a non-methylated recognition site, the enzyme complex serves as a molecular motor that translocates DNA in an ATP-dependent manner until a collision occurs that triggers cleavage. The protein is Type I restriction enzyme SsaAORF53P endonuclease subunit of Staphylococcus saprophyticus subsp. saprophyticus (strain ATCC 15305 / DSM 20229 / NCIMB 8711 / NCTC 7292 / S-41).